The primary structure comprises 156 residues: MTGKRELRVKPIVNGTVIDHITSGQSLNVLKILGINAASRYVVSVLMNVPSGEMKGKDVVKIENRELDPEELDSIALIAPRATINIIRNYEVVGKHRVDPPREVSGLVRCGNPNCISNTNEPVTSRFTVERTGDDIQLRCSYCEYVIDQEIADHLL.

Residues Cys-110, Cys-115, Cys-140, and Cys-143 each contribute to the Zn(2+) site.

It belongs to the PyrI family. As to quaternary structure, contains catalytic and regulatory chains. Requires Zn(2+) as cofactor.

Functionally, involved in allosteric regulation of aspartate carbamoyltransferase. The chain is Aspartate carbamoyltransferase regulatory chain from Methanocella arvoryzae (strain DSM 22066 / NBRC 105507 / MRE50).